Here is a 194-residue protein sequence, read N- to C-terminus: Peptidyl-tRNA hydrolase (194 aa).

Residue Y17 coordinates tRNA. Residue H22 is the Proton acceptor of the active site. Y68, N70, and N116 together coordinate tRNA.

This sequence belongs to the PTH family. Monomer.

Its subcellular location is the cytoplasm. The enzyme catalyses an N-acyl-L-alpha-aminoacyl-tRNA + H2O = an N-acyl-L-amino acid + a tRNA + H(+). Hydrolyzes ribosome-free peptidyl-tRNAs (with 1 or more amino acids incorporated), which drop off the ribosome during protein synthesis, or as a result of ribosome stalling. In terms of biological role, catalyzes the release of premature peptidyl moieties from peptidyl-tRNA molecules trapped in stalled 50S ribosomal subunits, and thus maintains levels of free tRNAs and 50S ribosomes. In Pseudomonas savastanoi pv. phaseolicola (strain 1448A / Race 6) (Pseudomonas syringae pv. phaseolicola (strain 1448A / Race 6)), this protein is Peptidyl-tRNA hydrolase.